The following is a 184-amino-acid chain: MVRTLYAIGAVFLLTGFLLPTAEGRKRNRGSQGAIPPPDKDQPNDSEQMQTQQQSGSRHRERGKGTSMPAEEVLESSQEALHITERKYLKRDWCKTQPLKQTIHEEGCNSRTIINRFCYGQCNSFYIPRHVRKEEGSFQSCSFCKPKKFTTMTVTLNCPELQPPRKKKRITRVKECRCISIDLD.

The signal sequence occupies residues 1-24 (MVRTLYAIGAVFLLTGFLLPTAEG). A disordered region spans residues 24 to 77 (GRKRNRGSQGAIPPPDKDQPNDSEQMQTQQQSGSRHRERGKGTSMPAEEVLESS). N-linked (GlcNAc...) asparagine glycosylation is present at Asn44. Residues 45 to 56 (DSEQMQTQQQSG) are compositionally biased toward polar residues. 4 cysteine pairs are disulfide-bonded: Cys94–Cys144, Cys108–Cys158, Cys118–Cys176, and Cys122–Cys178. A CTCK domain is found at 94 to 184 (CKTQPLKQTI…ECRCISIDLD (91 aa)).

Belongs to the DAN family.

The protein resides in the secreted. Functionally, cytokine that may play a role in the development of the medial pallium and during optic nerve and pecten development by modulating BMP signaling. The protein is Gremlin-1 (GREM1) of Gallus gallus (Chicken).